A 702-amino-acid chain; its full sequence is Polyribonucleotide nucleotidyltransferase (702 aa).

Positions 493 and 499 each coordinate Mg(2+). The 61-residue stretch at 559-619 folds into the KH domain; it reads PKVEIFNVDP…NLISQSKEYI (61 aa). Residues 643-702 form the S1 motif domain; the sequence is GEEFLGRVQKVVEFGVFVELKEGVDGLLHNSKIKEKLEVGHEIKVKVAEIKNGKVSLDLA.

Belongs to the polyribonucleotide nucleotidyltransferase family. Requires Mg(2+) as cofactor.

Its subcellular location is the cytoplasm. The enzyme catalyses RNA(n+1) + phosphate = RNA(n) + a ribonucleoside 5'-diphosphate. Its function is as follows. Involved in mRNA degradation. Catalyzes the phosphorolysis of single-stranded polyribonucleotides processively in the 3'- to 5'-direction. This chain is Polyribonucleotide nucleotidyltransferase, found in Campylobacter lari (strain RM2100 / D67 / ATCC BAA-1060).